The sequence spans 314 residues: MTERNQTVISQFLLLGLPIPPEHQHVFYALFLSMYLTTVLGNLIIIILILLDSHLHTPMYLFLSNLSFSDLCFSSVTMPKLLQNMQSQVPSIPYAGCLSQIYFFLFFGDLGNFLLVAMAYDRYVAICFPLHYMSIMSPKLCVSLVVLSWVLTTFHAMLHTLLMARLSFCEDNVIPHFFCDMSALLKLACSDTRVNEVVIFIVVSLFLVLPFALIIMSYVRIVSSILKVPSSQGIYKAFSTCGSHLSVVSLFYGTVIGLYLCPSSNNSTVKETVMSLMYTVVTPMLNPFIYSLRNRDIKGAMERIFCKRKIQLNL.

Topologically, residues 1–29 (MTERNQTVISQFLLLGLPIPPEHQHVFYA) are extracellular. N-linked (GlcNAc...) asparagine glycosylation occurs at Asn5. A helical membrane pass occupies residues 30-50 (LFLSMYLTTVLGNLIIIILIL). Over 51-59 (LDSHLHTPM) the chain is Cytoplasmic. A helical transmembrane segment spans residues 60-81 (YLFLSNLSFSDLCFSSVTMPKL). Topologically, residues 82-97 (LQNMQSQVPSIPYAGC) are extracellular. Cys97 and Cys179 are oxidised to a cystine. The chain crosses the membrane as a helical span at residues 98–118 (LSQIYFFLFFGDLGNFLLVAM). Residues 119–143 (AYDRYVAICFPLHYMSIMSPKLCVS) are Cytoplasmic-facing. The chain crosses the membrane as a helical span at residues 144 to 164 (LVVLSWVLTTFHAMLHTLLMA). Residues 165–196 (RLSFCEDNVIPHFFCDMSALLKLACSDTRVNE) are Extracellular-facing. A helical membrane pass occupies residues 197–217 (VVIFIVVSLFLVLPFALIIMS). Over 218–240 (YVRIVSSILKVPSSQGIYKAFST) the chain is Cytoplasmic. A helical transmembrane segment spans residues 241-261 (CGSHLSVVSLFYGTVIGLYLC). The Extracellular portion of the chain corresponds to 262 to 271 (PSSNNSTVKE). 2 N-linked (GlcNAc...) asparagine glycosylation sites follow: Asn265 and Asn266. The helical transmembrane segment at 272–292 (TVMSLMYTVVTPMLNPFIYSL) threads the bilayer. Topologically, residues 293–314 (RNRDIKGAMERIFCKRKIQLNL) are cytoplasmic.

This sequence belongs to the G-protein coupled receptor 1 family. In terms of tissue distribution, olfactory epithelium.

It localises to the cell membrane. Odorant receptor. Activated by a lily-derived aldehyde as well as other odorants. May signal through an inositol 1,4,5-trisphosphate (IP3) second messenger system. This is Olfactory receptor 1 from Rattus norvegicus (Rat).